The following is a 488-amino-acid chain: Protein nucleotidyltransferase YdiU (488 aa).

ATP-binding residues include Gly91, Gly93, Arg94, Lys114, Asp126, Gly127, Arg177, and Arg184. Asp253 serves as the catalytic Proton acceptor. Residues Asn254 and Asp263 each contribute to the Mg(2+) site. Asp263 provides a ligand contact to ATP.

The protein belongs to the SELO family. Mg(2+) serves as cofactor. Mn(2+) is required as a cofactor.

It catalyses the reaction L-seryl-[protein] + ATP = 3-O-(5'-adenylyl)-L-seryl-[protein] + diphosphate. The catalysed reaction is L-threonyl-[protein] + ATP = 3-O-(5'-adenylyl)-L-threonyl-[protein] + diphosphate. The enzyme catalyses L-tyrosyl-[protein] + ATP = O-(5'-adenylyl)-L-tyrosyl-[protein] + diphosphate. It carries out the reaction L-histidyl-[protein] + UTP = N(tele)-(5'-uridylyl)-L-histidyl-[protein] + diphosphate. It catalyses the reaction L-seryl-[protein] + UTP = O-(5'-uridylyl)-L-seryl-[protein] + diphosphate. The catalysed reaction is L-tyrosyl-[protein] + UTP = O-(5'-uridylyl)-L-tyrosyl-[protein] + diphosphate. Its function is as follows. Nucleotidyltransferase involved in the post-translational modification of proteins. It can catalyze the addition of adenosine monophosphate (AMP) or uridine monophosphate (UMP) to a protein, resulting in modifications known as AMPylation and UMPylation. The sequence is that of Protein nucleotidyltransferase YdiU from Bacillus cereus (strain AH187).